The primary structure comprises 251 residues: Cell division protein ZapD (251 aa).

The protein belongs to the ZapD family. As to quaternary structure, interacts with FtsZ.

It is found in the cytoplasm. Cell division factor that enhances FtsZ-ring assembly. Directly interacts with FtsZ and promotes bundling of FtsZ protofilaments, with a reduction in FtsZ GTPase activity. This chain is Cell division protein ZapD, found in Burkholderia thailandensis (strain ATCC 700388 / DSM 13276 / CCUG 48851 / CIP 106301 / E264).